The following is a 580-amino-acid chain: Glutamine--tRNA ligase (580 aa).

The short motif at 41–51 (PEPNGYLHIGH) is the 'HIGH' region element. ATP-binding positions include 42 to 44 (EPN) and 48 to 54 (HIGHAKA). 2 residues coordinate L-glutamine: aspartate 74 and tyrosine 218. ATP is bound by residues threonine 237, 285-286 (RL), and 293-295 (MSK). The 'KMSKS' region motif lies at 292–296 (VMSKR).

The protein belongs to the class-I aminoacyl-tRNA synthetase family. Monomer.

The protein localises to the cytoplasm. It carries out the reaction tRNA(Gln) + L-glutamine + ATP = L-glutaminyl-tRNA(Gln) + AMP + diphosphate. This chain is Glutamine--tRNA ligase, found in Xylella fastidiosa (strain Temecula1 / ATCC 700964).